The sequence spans 164 residues: Ubiquitin-fold modifier-conjugating enzyme 1 (164 aa).

Cys116 functions as the Glycyl thioester intermediate in the catalytic mechanism.

It belongs to the ubiquitin-conjugating enzyme family. UFC1 subfamily.

In terms of biological role, E2-like enzyme which forms an intermediate with UFM1 via a thioester linkage. The protein is Ubiquitin-fold modifier-conjugating enzyme 1 of Drosophila erecta (Fruit fly).